Here is a 213-residue protein sequence, read N- to C-terminus: Non-structural protein 7b (213 aa).

A signal peptide spans 1–15 (MKFLIFVLCLSLVNG).

This Canine coronavirus (strain K378) (CCoV) protein is Non-structural protein 7b.